The following is a 577-amino-acid chain: Arginine--tRNA ligase (577 aa).

A 'HIGH' region motif is present at residues 123 to 133 (PNVAKEMHVGH).

This sequence belongs to the class-I aminoacyl-tRNA synthetase family. As to quaternary structure, monomer.

It localises to the cytoplasm. It catalyses the reaction tRNA(Arg) + L-arginine + ATP = L-arginyl-tRNA(Arg) + AMP + diphosphate. This chain is Arginine--tRNA ligase, found in Cronobacter sakazakii (strain ATCC BAA-894) (Enterobacter sakazakii).